A 167-amino-acid chain; its full sequence is RNA pyrophosphohydrolase (167 aa).

Residues 7 to 160 (PYRPCVGVMV…KRRAYEEVVA (154 aa)) enclose the Nudix hydrolase domain. The Nudix box signature appears at 48–69 (GGIDEGEDPLEAACRELYEETG).

The protein belongs to the Nudix hydrolase family. RppH subfamily. A divalent metal cation serves as cofactor.

Accelerates the degradation of transcripts by removing pyrophosphate from the 5'-end of triphosphorylated RNA, leading to a more labile monophosphorylated state that can stimulate subsequent ribonuclease cleavage. This chain is RNA pyrophosphohydrolase, found in Rhizobium meliloti (strain 1021) (Ensifer meliloti).